A 141-amino-acid polypeptide reads, in one-letter code: Protein C19orf12 homolog (141 aa).

A helical membrane pass occupies residues Leu33–Val53.

It belongs to the C19orf12 family.

The protein resides in the mitochondrion. Its subcellular location is the mitochondrion membrane. It localises to the endoplasmic reticulum. It is found in the cytoplasm. The protein localises to the cytosol. The sequence is that of Protein C19orf12 homolog from Xenopus tropicalis (Western clawed frog).